The primary structure comprises 326 residues: Olfactory receptor 11H1 (326 aa).

Residues 1–44 lie on the Extracellular side of the membrane; that stretch reads MCPLTLQVTGLMNVSEPNSSFAFVNEFILQGFSCEWTIQIFLFS. N-linked (GlcNAc...) asparagine glycans are attached at residues N13 and N18. The chain crosses the membrane as a helical span at residues 45-65; the sequence is LFTTTYALTITGNGAIAFVLW. Over 66–72 the chain is Cytoplasmic; the sequence is CDRRLHT. Residues 73–93 form a helical membrane-spanning segment; that stretch reads PMYMFLGNFSFLEIWYVSSTV. Residues 94 to 112 are Extracellular-facing; the sequence is PKMLVNFLSEKKNISFAGC. N106 carries N-linked (GlcNAc...) asparagine glycosylation. An intrachain disulfide couples C112 to C194. Residues 113-133 traverse the membrane as a helical segment; the sequence is FLQFYFFFSLGTSECLLLTVM. Residues 134 to 158 lie on the Cytoplasmic side of the membrane; the sequence is AFDQYLAICRPLLYPNIMTGHLYAK. Residues 159 to 179 traverse the membrane as a helical segment; that stretch reads LVILCWVCGFLWFLIPIVLIS. Residues 180 to 216 are Extracellular-facing; sequence QMPFCGPNIIDHVVCDPGPRFALDCVSAPRIQLFCYT. A helical transmembrane segment spans residues 217-237; it reads LSSLVIFGNFLFIIGSYTLVL. The Cytoplasmic portion of the chain corresponds to 238-259; sequence KAMLGMPSSTGRHKAFSTCGSH. A helical membrane pass occupies residues 260-280; sequence LAVVSLCYSSLMVMYVSPGLG. The Extracellular segment spans residues 281–287; sequence HSTGMQK. The helical transmembrane segment at 288 to 308 threads the bilayer; it reads IETLFYAMVTPLFNPLIYSLQ. Residues 309–326 lie on the Cytoplasmic side of the membrane; the sequence is NKEIKAALRKVLGSSNII.

It belongs to the G-protein coupled receptor 1 family.

The protein resides in the cell membrane. In terms of biological role, odorant receptor. In Homo sapiens (Human), this protein is Olfactory receptor 11H1 (OR11H1).